Consider the following 116-residue polypeptide: Large ribosomal subunit protein uL18 (116 aa).

Belongs to the universal ribosomal protein uL18 family. In terms of assembly, part of the 50S ribosomal subunit; part of the 5S rRNA/L5/L18/L25 subcomplex. Contacts the 5S and 23S rRNAs.

Its function is as follows. This is one of the proteins that bind and probably mediate the attachment of the 5S RNA into the large ribosomal subunit, where it forms part of the central protuberance. The sequence is that of Large ribosomal subunit protein uL18 from Shewanella denitrificans (strain OS217 / ATCC BAA-1090 / DSM 15013).